A 31-amino-acid polypeptide reads, in one-letter code: Electron transfer flavoprotein-ubiquinone oxidoreductase (31 aa).

An FAD-binding site is contributed by 11-25 (VVIVGAGGAGLSAAI).

Monomer. The cofactor is [4Fe-4S] cluster. It depends on FAD as a cofactor.

It catalyses the reaction a ubiquinone + reduced [electron-transfer flavoprotein] = a ubiquinol + oxidized [electron-transfer flavoprotein] + H(+). Its function is as follows. Accepts electrons from ETF and reduces ubiquinone. The chain is Electron transfer flavoprotein-ubiquinone oxidoreductase from Paracoccus denitrificans.